Here is a 198-residue protein sequence, read N- to C-terminus: Proteasome subunit beta 2 (198 aa).

Residues 1–4 (MVLA) constitute a propeptide, removed in mature form; by autocatalysis. Residue threonine 5 is the Nucleophile of the active site.

It belongs to the peptidase T1B family. The 20S proteasome core is composed of 14 alpha and 14 beta subunits that assemble into four stacked heptameric rings, resulting in a barrel-shaped structure. The two inner rings, each composed of seven catalytic beta subunits, are sandwiched by two outer rings, each composed of seven alpha subunits. The catalytic chamber with the active sites is on the inside of the barrel. Has a gated structure, the ends of the cylinder being occluded by the N-termini of the alpha-subunits. Is capped at one or both ends by the proteasome regulatory ATPase, PAN.

The protein localises to the cytoplasm. It carries out the reaction Cleavage of peptide bonds with very broad specificity.. The formation of the proteasomal ATPase PAN-20S proteasome complex, via the docking of the C-termini of PAN into the intersubunit pockets in the alpha-rings, triggers opening of the gate for substrate entry. Interconversion between the open-gate and close-gate conformations leads to a dynamic regulation of the 20S proteasome proteolysis activity. Component of the proteasome core, a large protease complex with broad specificity involved in protein degradation. This Korarchaeum cryptofilum (strain OPF8) protein is Proteasome subunit beta 2.